Reading from the N-terminus, the 266-residue chain is Apolipoprotein A-I (266 aa).

A signal peptide spans 1-18 (MKAVVLTLAVLFLTGSQA). Tandem repeats lie at residues 67–88 (LKLLDNWDSLSSTVAKLREQIG) and 89–110 (PVTQEFWDNLEKETEVLRQEMS). The tract at residues 67 to 266 (LKLLDNWDSL…DEATKKLNSQ (200 aa)) is 10 X approximate tandem repeats. Methionine 109 carries the post-translational modification Methionine sulfoxide. Residues 111 to 121 (KDLEEVKKKVQ) form a 3; half-length repeat. 5 repeat units span residues 122 to 143 (PYLDEFQSKWHEEVELYRQKVA), 144 to 165 (PLGAELREGARQKLQELQEKLS), 166 to 187 (PLAEELRDRARAHVDALRAQLA), 188 to 209 (PYSEQLRERLAARLQALKEGGG), and 210 to 231 (AALTEYHAKASEHLSALREKAK). A 9; half-length repeat occupies 232 to 242 (PALEDLRQGLL). Copy 10 of the repeat occupies 243 to 266 (PVLENFRVSLLAAVDEATKKLNSQ).

The protein belongs to the apolipoprotein A1/A4/E family. In terms of assembly, homodimer. Interacts with APOA1BP and CLU. Component of a sperm activating protein complex (SPAP), consisting of APOA1, an immunoglobulin heavy chain, an immunoglobulin light chain and albumin. Interacts with NDRG1. Interacts with SCGB3A2. Interacts with NAXE and YJEFN3. Post-translationally, glycosylated. In terms of processing, palmitoylated. Phosphorylation sites are present in the extracellular medium.

It localises to the secreted. Participates in the reverse transport of cholesterol from tissues to the liver for excretion by promoting cholesterol efflux from tissues and by acting as a cofactor for the lecithin cholesterol acyltransferase (LCAT). As part of the SPAP complex, activates spermatozoa motility. This is Apolipoprotein A-I (APOA1) from Mirounga angustirostris (Northern elephant seal).